The following is a 231-amino-acid chain: ATP phosphoribosyltransferase (231 aa).

This sequence belongs to the ATP phosphoribosyltransferase family. Short subfamily. In terms of assembly, heteromultimer composed of HisG and HisZ subunits.

The protein localises to the cytoplasm. It carries out the reaction 1-(5-phospho-beta-D-ribosyl)-ATP + diphosphate = 5-phospho-alpha-D-ribose 1-diphosphate + ATP. Its pathway is amino-acid biosynthesis; L-histidine biosynthesis; L-histidine from 5-phospho-alpha-D-ribose 1-diphosphate: step 1/9. In terms of biological role, catalyzes the condensation of ATP and 5-phosphoribose 1-diphosphate to form N'-(5'-phosphoribosyl)-ATP (PR-ATP). Has a crucial role in the pathway because the rate of histidine biosynthesis seems to be controlled primarily by regulation of HisG enzymatic activity. This Brucella anthropi (strain ATCC 49188 / DSM 6882 / CCUG 24695 / JCM 21032 / LMG 3331 / NBRC 15819 / NCTC 12168 / Alc 37) (Ochrobactrum anthropi) protein is ATP phosphoribosyltransferase.